Here is a 282-residue protein sequence, read N- to C-terminus: Fibrinogen-like protein A (282 aa).

Positions Met-1–Ser-24 are cleaved as a signal peptide. Residues Ser-61 to Ser-281 form the Fibrinogen C-terminal domain. 2 disulfide bridges follow: Cys-70/Cys-101 and Cys-224/Cys-240.

In Apostichopus parvimensis (Warty sea cucumber), this protein is Fibrinogen-like protein A.